Reading from the N-terminus, the 399-residue chain is Accessory Sec system protein translocase subunit SecY2 (399 aa).

10 helical membrane passes run 14-34 (ILFT…SIVG), 60-80 (LNVF…IMLL), 102-122 (IITI…YIHN), 128-148 (SNII…VWLA), 152-172 (ITYG…KSLF), 184-204 (VLLL…LLFI), 238-258 (ISIM…NLIA), 272-292 (FANP…SYLL), 335-355 (WTGA…TLLV), and 362-382 (IYFS…GETI).

It belongs to the SecY/SEC61-alpha family. SecY2 subfamily. In terms of assembly, component of the accessory SecA2/SecY2 protein translocase complex required to export cell wall proteins. May form heterotrimers with SecE and SecG subunits.

It localises to the cell membrane. Its function is as follows. Part of the accessory SecA2/SecY2 system specifically required for export of possible cell wall proteins. The central subunit of a protein translocation channel. The chain is Accessory Sec system protein translocase subunit SecY2 from Staphylococcus haemolyticus (strain JCSC1435).